The following is an 83-amino-acid chain: Mu-theraphotoxin-Hhn2j 3 (83 aa).

The first 21 residues, 1–21 (MKALMFLALAGLVLLFVVGYA), serve as a signal peptide directing secretion. Positions 22–48 (SESEEKEFPIELLSKIFAVDVFKGEER) are excised as a propeptide. 3 disulfides stabilise this stretch: C50-C65, C57-C70, and C64-C77. L81 carries the post-translational modification Leucine amide.

Belongs to the neurotoxin 10 (Hwtx-1) family. 15 (Hntx-3) subfamily. As to quaternary structure, monomer. In terms of tissue distribution, expressed by the venom gland.

Its subcellular location is the secreted. Its function is as follows. Lethal neurotoxin. Selectively blocks tetrodotoxin-sensitive voltage-gated sodium channels (Nav). Does not affect tetrodotoxin-resistant voltage-gated sodium channels or calcium channels. This chain is Mu-theraphotoxin-Hhn2j 3, found in Cyriopagopus hainanus (Chinese bird spider).